The primary structure comprises 259 residues: Sesquipedalian-2 (259 aa).

A PH domain is found at Pro-17–Phe-121. Positions Met-124–Gln-150 form a coiled coil. Positions Ser-155 to Asp-178 are disordered. Over residues Ala-161–Asp-178 the composition is skewed to basic and acidic residues. The short motif at Cys-223 to Ile-235 is the F&amp;H element.

Belongs to the sesquipedalian family. In terms of assembly, forms homodimers and heterodimers with PHETA1. Interacts with OCRL and INPP5B.

The protein localises to the early endosome. The protein resides in the recycling endosome. Its subcellular location is the golgi apparatus. It is found in the trans-Golgi network. It localises to the cytoplasmic vesicle. The protein localises to the clathrin-coated vesicle. Plays a role in endocytic trafficking. Required for receptor recycling from endosomes, both to the trans-Golgi network and the plasma membrane. The chain is Sesquipedalian-2 from Mus musculus (Mouse).